The primary structure comprises 699 residues: Elongation factor G (699 aa).

The 281-residue stretch at 8–288 (EDYRNFGIMA…AVVDYLPSPM (281 aa)) folds into the tr-type G domain. GTP contacts are provided by residues 17–24 (AHIDAGKT), 86–90 (DTPGH), and 140–143 (NKMD).

This sequence belongs to the TRAFAC class translation factor GTPase superfamily. Classic translation factor GTPase family. EF-G/EF-2 subfamily.

The protein resides in the cytoplasm. Catalyzes the GTP-dependent ribosomal translocation step during translation elongation. During this step, the ribosome changes from the pre-translocational (PRE) to the post-translocational (POST) state as the newly formed A-site-bound peptidyl-tRNA and P-site-bound deacylated tRNA move to the P and E sites, respectively. Catalyzes the coordinated movement of the two tRNA molecules, the mRNA and conformational changes in the ribosome. This Rhizobium johnstonii (strain DSM 114642 / LMG 32736 / 3841) (Rhizobium leguminosarum bv. viciae) protein is Elongation factor G.